We begin with the raw amino-acid sequence, 203 residues long: Non-histone protein 10 (203 aa).

N-acetylserine is present on S2. Disordered stretches follow at residues 78–97 and 161–203; these read KSKT…PKRP and ISNI…VSSN. A DNA-binding region (HMG box) is located at residues 94–158; the sequence is PKRPTNAYLL…RYQMEMEIYN (65 aa).

In terms of assembly, component of the chromatin-remodeling INO80 complex, at least composed of ARP4, ARP5, ARP8, RVB1, RVB2, TAF14, NHP10, IES1, IES3, IES4, IES6, ACT1, IES2, IES5 and INO80.

Its subcellular location is the nucleus. Functionally, probably involved in transcription regulation via its interaction with the INO80 complex, a chromatin remodeling complex. This Saccharomyces cerevisiae (strain ATCC 204508 / S288c) (Baker's yeast) protein is Non-histone protein 10 (NHP10).